The primary structure comprises 310 residues: D-alanine--D-alanine ligase (310 aa).

The region spanning 105–301 (KQAFVSAGIL…FEELVERIIL (197 aa)) is the ATP-grasp domain. An ATP-binding site is contributed by 133–186 (SFGLPLVVKPVQEGSSVGISIVKEESQLAAAVKLAFRHDDEILVEQFIKGQEVQ). Mg(2+)-binding residues include Asp254, Glu267, and Asn269.

This sequence belongs to the D-alanine--D-alanine ligase family. The cofactor is Mg(2+). Requires Mn(2+) as cofactor.

It localises to the cytoplasm. It catalyses the reaction 2 D-alanine + ATP = D-alanyl-D-alanine + ADP + phosphate + H(+). The protein operates within cell wall biogenesis; peptidoglycan biosynthesis. Cell wall formation. The sequence is that of D-alanine--D-alanine ligase from Pelobacter propionicus (strain DSM 2379 / NBRC 103807 / OttBd1).